Here is a 410-residue protein sequence, read N- to C-terminus: Transposase for insertion sequence element IS801 (410 aa).

Belongs to the transposase 32 family.

In terms of biological role, involved in the transposition of the insertion sequence. In Pseudomonas savastanoi pv. phaseolicola (Pseudomonas syringae pv. phaseolicola), this protein is Transposase for insertion sequence element IS801.